The primary structure comprises 391 residues: Curcumin synthase 2 (391 aa).

Residue Cys166 is part of the active site.

Belongs to the thiolase-like superfamily. Chalcone/stilbene synthases family. As to quaternary structure, homodimer.

The enzyme catalyses (E)-feruloylacetyl-CoA + (E)-feruloyl-CoA + H2O = curcumin + CO2 + 2 CoA. It functions in the pathway secondary metabolite biosynthesis; flavonoid biosynthesis. Functionally, catalyzes the synthesis of curcumin by condensing feruloyl-CoA with a diketide-CoA in the curcuminoid biosynthesis. In Curcuma longa (Turmeric), this protein is Curcumin synthase 2 (CURS2).